The sequence spans 79 residues: Exodeoxyribonuclease 7 small subunit (79 aa).

It belongs to the XseB family. Heterooligomer composed of large and small subunits.

It is found in the cytoplasm. It carries out the reaction Exonucleolytic cleavage in either 5'- to 3'- or 3'- to 5'-direction to yield nucleoside 5'-phosphates.. Its function is as follows. Bidirectionally degrades single-stranded DNA into large acid-insoluble oligonucleotides, which are then degraded further into small acid-soluble oligonucleotides. This chain is Exodeoxyribonuclease 7 small subunit, found in Dechloromonas aromatica (strain RCB).